We begin with the raw amino-acid sequence, 133 residues long: Large ribosomal subunit protein uL16c (133 aa).

The protein belongs to the universal ribosomal protein uL16 family. Part of the 50S ribosomal subunit.

It is found in the plastid. The protein localises to the chloroplast. This is Large ribosomal subunit protein uL16c from Liriodendron tulipifera (Tuliptree).